The sequence spans 103 residues: Large ribosomal subunit protein bL21 (103 aa).

This sequence belongs to the bacterial ribosomal protein bL21 family. Part of the 50S ribosomal subunit. Contacts protein L20.

In terms of biological role, this protein binds to 23S rRNA in the presence of protein L20. This chain is Large ribosomal subunit protein bL21, found in Vibrio cholerae serotype O1 (strain ATCC 39541 / Classical Ogawa 395 / O395).